Reading from the N-terminus, the 689-residue chain is Glycine--tRNA ligase beta subunit (689 aa).

Belongs to the class-II aminoacyl-tRNA synthetase family. Tetramer of two alpha and two beta subunits.

It localises to the cytoplasm. It carries out the reaction tRNA(Gly) + glycine + ATP = glycyl-tRNA(Gly) + AMP + diphosphate. In Shewanella piezotolerans (strain WP3 / JCM 13877), this protein is Glycine--tRNA ligase beta subunit.